We begin with the raw amino-acid sequence, 335 residues long: Biotin synthase (335 aa).

One can recognise a Radical SAM core domain in the interval 46–274 (YDIQLASLFS…KSKIRLSAGR (229 aa)). [4Fe-4S] cluster is bound by residues Cys-61, Cys-65, and Cys-68. The [2Fe-2S] cluster site is built by Cys-105, Cys-137, Cys-197, and Arg-269.

It belongs to the radical SAM superfamily. Biotin synthase family. As to quaternary structure, homodimer. It depends on [4Fe-4S] cluster as a cofactor. [2Fe-2S] cluster is required as a cofactor.

It catalyses the reaction (4R,5S)-dethiobiotin + (sulfur carrier)-SH + 2 reduced [2Fe-2S]-[ferredoxin] + 2 S-adenosyl-L-methionine = (sulfur carrier)-H + biotin + 2 5'-deoxyadenosine + 2 L-methionine + 2 oxidized [2Fe-2S]-[ferredoxin]. The protein operates within cofactor biosynthesis; biotin biosynthesis; biotin from 7,8-diaminononanoate: step 2/2. Its function is as follows. Catalyzes the conversion of dethiobiotin (DTB) to biotin by the insertion of a sulfur atom into dethiobiotin via a radical-based mechanism. In Prochlorococcus marinus (strain MIT 9215), this protein is Biotin synthase.